Consider the following 861-residue polypeptide: DNA mismatch repair protein MutS (861 aa).

Residue 616 to 623 coordinates ATP; it reads GPNMGGKS.

The protein belongs to the DNA mismatch repair MutS family.

Its function is as follows. This protein is involved in the repair of mismatches in DNA. It is possible that it carries out the mismatch recognition step. This protein has a weak ATPase activity. This Haemophilus influenzae (strain 86-028NP) protein is DNA mismatch repair protein MutS.